The primary structure comprises 219 residues: Intraflagellar transport protein 22 (219 aa).

GTP contacts are provided by residues 12-19 and 72-79; these read GPSKSGKS and WDVGGSSK.

The protein belongs to the small GTPase superfamily. Rab family.

The protein resides in the cytoplasm. It is found in the cytoskeleton. It localises to the flagellum basal body. The protein localises to the cell projection. Its subcellular location is the cilium. The protein resides in the flagellum. Its function is as follows. Required for flagellum formation. The chain is Intraflagellar transport protein 22 (IFT22) from Trypanosoma brucei brucei (strain 927/4 GUTat10.1).